A 250-amino-acid chain; its full sequence is Probable xyloglucan-specific endo-beta-1,4-glucanase A (250 aa).

Residues 1 to 19 (MKLSVLSLASLASAAALNA) form the signal peptide. A glycan (N-linked (GlcNAc...) asparagine) is linked at N72.

Belongs to the glycosyl hydrolase 12 (cellulase H) family.

It localises to the secreted. It catalyses the reaction xyloglucan + H2O = xyloglucan oligosaccharides.. In terms of biological role, catalyzes endohydrolysis of 1,4-beta-D-glucosidic linkages in xyloglucan with retention of the beta-configuration of the glycosyl residues. Specific for xyloglucan and does not hydrolyze other cell wall components. This Aspergillus terreus (strain NIH 2624 / FGSC A1156) protein is Probable xyloglucan-specific endo-beta-1,4-glucanase A (xgeA).